The sequence spans 298 residues: Ethanolamine ammonia-lyase small subunit (298 aa).

Positions 15–43 are disordered; that stretch reads ASMGQDVPQPVAPSTQEGAKPQRAAPTAT. Residues valine 210, glutamate 231, and cysteine 261 each contribute to the adenosylcob(III)alamin site.

It belongs to the EutC family. In terms of assembly, the basic unit is a heterodimer which dimerizes to form tetramers. The heterotetramers trimerize; 6 large subunits form a core ring with 6 small subunits projecting outwards. Adenosylcob(III)alamin is required as a cofactor.

Its subcellular location is the bacterial microcompartment. The enzyme catalyses ethanolamine = acetaldehyde + NH4(+). Its pathway is amine and polyamine degradation; ethanolamine degradation. Functionally, catalyzes the deamination of various vicinal amino-alcohols to oxo compounds. Allows this organism to utilize ethanolamine as the sole source of nitrogen and carbon in the presence of external vitamin B12. This Salmonella arizonae (strain ATCC BAA-731 / CDC346-86 / RSK2980) protein is Ethanolamine ammonia-lyase small subunit.